We begin with the raw amino-acid sequence, 284 residues long: Shikimate dehydrogenase (NADP(+)) (284 aa).

Shikimate-binding positions include 20–22 (SIS) and S67. K71 acts as the Proton acceptor in catalysis. D83 is a binding site for NADP(+). Residues N92 and D107 each contribute to the shikimate site. Residues 129–133 (GAGGA) and I227 contribute to the NADP(+) site. Y229 serves as a coordination point for shikimate. G250 is a binding site for NADP(+).

The protein belongs to the shikimate dehydrogenase family. In terms of assembly, homodimer.

The enzyme catalyses shikimate + NADP(+) = 3-dehydroshikimate + NADPH + H(+). It functions in the pathway metabolic intermediate biosynthesis; chorismate biosynthesis; chorismate from D-erythrose 4-phosphate and phosphoenolpyruvate: step 4/7. In terms of biological role, involved in the biosynthesis of the chorismate, which leads to the biosynthesis of aromatic amino acids. Catalyzes the reversible NADPH linked reduction of 3-dehydroshikimate (DHSA) to yield shikimate (SA). The protein is Shikimate dehydrogenase (NADP(+)) of Streptococcus pneumoniae (strain P1031).